The following is a 1194-amino-acid chain: Rho-associated protein kinase let-502 (1194 aa).

The 263-residue stretch at 68 to 330 (FRQLKVIGRG…VDEIRNHKFF (263 aa)) folds into the Protein kinase domain. ATP contacts are provided by residues 74 to 82 (IGRGAFGEV) and K97. The active-site Proton acceptor is D190. Residues 331 to 402 (KNDEWTFETL…SNEYSPVKKL (72 aa)) form the AGC-kinase C-terminal domain. Coiled-coil stretches lie at residues 436–844 (EEQY…MAKR) and 875–933 (GRIL…EYPQ). Residues 784–846 (EQNLKHIENQ…LEEEMAKRQP (63 aa)) enclose the RhoBD domain. Residues 961-1171 (IQIDGWLSLR…SQLRRFIEAS (211 aa)) form the PH domain. Residues 1085–1138 (RHDFQELSYHTRTYCDDCGKKLSDFIRPTPAFECKNCHYKTHKEHIAQGTITMC) form a Phorbol-ester/DAG-type zinc finger.

Belongs to the protein kinase superfamily. AGC Ser/Thr protein kinase family. As to quaternary structure, interacts with rho-1. The cofactor is Mg(2+).

It localises to the cytoplasm. The protein localises to the cytoskeleton. It is found in the cleavage furrow. It carries out the reaction L-seryl-[protein] + ATP = O-phospho-L-seryl-[protein] + ADP + H(+). The catalysed reaction is L-threonyl-[protein] + ATP = O-phospho-L-threonyl-[protein] + ADP + H(+). Its activity is regulated as follows. Activated by rho-1 binding. Functionally, negatively regulates mel-11 to relieve the inhibition of mlc-4, allowing contraction of the circumferentially oriented microfilaments in epidermal cells and thereby regulating myosin II contractility during spermathecal contraction, cleavage furrow contraction in early embryos, and embryonic elongation and morphogenesis. Required for P-cell migration. May also play a role in oocyte cellularization. The chain is Rho-associated protein kinase let-502 from Caenorhabditis briggsae.